We begin with the raw amino-acid sequence, 287 residues long: Protease HtpX (287 aa).

The next 2 helical transmembrane spans lie at 4 to 24 (ILLF…VLNI) and 36 to 56 (LSGL…ISLL). His143 is a Zn(2+) binding site. Glu144 is a catalytic residue. Residue His147 coordinates Zn(2+). Transmembrane regions (helical) follow at residues 158-178 (LMQG…ANIV) and 192-212 (MVYF…ASFI). Glu221 contacts Zn(2+).

This sequence belongs to the peptidase M48B family. It depends on Zn(2+) as a cofactor.

Its subcellular location is the cell inner membrane. The sequence is that of Protease HtpX from Vibrio cholerae serotype O1 (strain ATCC 39315 / El Tor Inaba N16961).